The sequence spans 154 residues: Myoglobin (154 aa).

One can recognise a Globin domain in the interval 2 to 148 (GLSDGEWQLV…FRNDMAAKYK (147 aa)). Residue Ser4 is modified to Phosphoserine. Residue His65 coordinates nitrite. His65 lines the O2 pocket. Thr68 is modified (phosphothreonine). His94 contributes to the heme b binding site.

This sequence belongs to the globin family. In terms of assembly, monomeric.

The protein localises to the cytoplasm. It is found in the sarcoplasm. It catalyses the reaction Fe(III)-heme b-[protein] + nitric oxide + H2O = Fe(II)-heme b-[protein] + nitrite + 2 H(+). The catalysed reaction is H2O2 + AH2 = A + 2 H2O. In terms of biological role, monomeric heme protein which primary function is to store oxygen and facilitate its diffusion within muscle tissues. Reversibly binds oxygen through a pentacoordinated heme iron and enables its timely and efficient release as needed during periods of heightened demand. Depending on the oxidative conditions of tissues and cells, and in addition to its ability to bind oxygen, it also has a nitrite reductase activity whereby it regulates the production of bioactive nitric oxide. Under stress conditions, like hypoxia and anoxia, it also protects cells against reactive oxygen species thanks to its pseudoperoxidase activity. The polypeptide is Myoglobin (MB) (Lagothrix lagotricha (Brown woolly monkey)).